A 239-amino-acid chain; its full sequence is Phosphothreonine lyase OspF (239 aa).

The Proton donor role is filled by H104. K134 functions as the Proton acceptor in the catalytic mechanism.

Belongs to the phosphothreonine lyase family.

It is found in the secreted. Its activity is regulated as follows. Inhibited by the tyrosine phosphatase inhibitor vanadate. In terms of biological role, catalyzes the removal of the phosphate group from the phosphothreonine in the mitogen-activated protein kinases such as MAPK2/ERK2, MAPK3/ERK1, MAPK8 and MAPK14 in an irreversible reaction, thus preventing the downstream phosphorylation of histone H3. This epigenetic modification results in inhibition of the transcription of a specific subset of pro-inflammatory genes, and ultimately to a reduced immune response against the invading pathogen. The diminished immune response enhances the bacterium's ability to disseminate and multiply within the host. The protein is Phosphothreonine lyase OspF (ospF) of Shigella flexneri.